The following is a 417-amino-acid chain: MSSKYPRSVRRCLPLCALTLEAALILLFYFFTQYDASLEDQKGLVASYQVGQDLTVMAAIGFGFLTSSFRRHSWSSVAFSLFMLALGVQWAILLDGFLSQFPPGKVVITLFSIRLATTSALSVLISVDAVLGKVNLVQLVVMVLVEVTALGTVRMVISNIFNTDYHMNLMHIYVFAAYFGLSVAWCLPKPLPKGTEDKDQIATIPSLSAMLGALFLWMFWPSFNSALLRSPIERKNAVFNTYYAVAVSVVTAISGSSLAHPQGKISMSYMHNAVLAGGVAVGTSCHLIPSPWLAMVLGLVAGLISVGGAKYLPGCCNRVLGIPHSSVMGSNFSWLGLLGEIIYIVLVVRHTIWNGNGMIGFQVLLRIGEFSLATTIALTSGLLTGLLLNLKIWKAPHEAKYFDDQVFWKFPHLAVGF.

11 consecutive transmembrane segments (helical) span residues Cys12–Thr32, Leu44–Phe64, Val77–Phe97, Ile125–Val145, Ile172–Pro192, Thr203–Phe223, Val238–Leu258, Ile265–Cys285, Leu287–Gly307, Asn331–Thr351, and Met358–Leu378.

It belongs to the ammonium transporter (TC 2.A.49) family. Rh subfamily.

The protein resides in the membrane. Its function is as follows. May be part of an oligomeric complex which is likely to have a transport or channel function in the erythrocyte membrane. This is RH-like protein IIR from Pan troglodytes (Chimpanzee).